Reading from the N-terminus, the 283-residue chain is Homeobox protein Hox-C12b (283 aa).

A DNA-binding region (homeobox) is located at residues 215–274 (TRKKRKPYSKLQLNELEGEFILNEFITRQRRRELSDRLNLTDQQVKIWFQNRRMKKKRLL).

This sequence belongs to the Abd-B homeobox family.

The protein resides in the nucleus. Sequence-specific transcription factor which is part of a developmental regulatory system that provides cells with specific positional identities on the anterior-posterior axis. The chain is Homeobox protein Hox-C12b (hoxc12b) from Danio rerio (Zebrafish).